A 223-amino-acid chain; its full sequence is Protein BTG4 (223 aa).

The protein belongs to the BTG family. In terms of assembly, interacts with CNOT7. Interacts with EIF4E. Interacts with CNOT8. In terms of tissue distribution, expressed in oocytes after germinal vesicle breakdown. Expressed in testis and in olfactory epithelium.

In terms of biological role, adapter protein that bridges CNOT7, a catalytic subunit of the CCR4-NOT complex, to EIF4E. Facilitates maternal mRNAs decay during the maturation of oocytes and in the fertilized egg, and is required for the maternal-zygotic transition (MZT), zygotic cleavage and initiation of embryonic development. This is Protein BTG4 (BTG4) from Homo sapiens (Human).